The sequence spans 89 residues: Small ribosomal subunit protein uS14A (89 aa).

The protein belongs to the universal ribosomal protein uS14 family. As to quaternary structure, part of the 30S ribosomal subunit. Contacts proteins S3 and S10.

Binds 16S rRNA, required for the assembly of 30S particles and may also be responsible for determining the conformation of the 16S rRNA at the A site. This is Small ribosomal subunit protein uS14A from Staphylococcus haemolyticus (strain JCSC1435).